The following is a 180-amino-acid chain: Adenine phosphoribosyltransferase (180 aa).

An N-acetylalanine modification is found at Ala2. Phosphoserine is present on residues Ser4, Ser15, and Ser30. Phosphotyrosine is present on Tyr60. Phosphoserine is present on Ser66. N6-acetyllysine is present on Lys114. Thr135 is subject to Phosphothreonine.

Belongs to the purine/pyrimidine phosphoribosyltransferase family. In terms of assembly, homodimer.

It localises to the cytoplasm. It carries out the reaction AMP + diphosphate = 5-phospho-alpha-D-ribose 1-diphosphate + adenine. Its pathway is purine metabolism; AMP biosynthesis via salvage pathway; AMP from adenine: step 1/1. In terms of biological role, catalyzes a salvage reaction resulting in the formation of AMP, that is energically less costly than de novo synthesis. The protein is Adenine phosphoribosyltransferase of Cricetulus griseus (Chinese hamster).